Here is a 275-residue protein sequence, read N- to C-terminus: MAIKKIGISARCDRPEIIGKVREILAHFSSRVQIFVATPTAEVLGMEGTPVERMREEGVELIISVGGDGTVLRNIAKMKDPLPILGINMGTLGFLVDVEPEDALETIEEVLYGFSYSDRMRVDVFLNGEMLETATNEIAIMSAKPAKIIQFEVYVGDCLLDSMRADGVVFATPTGSTAYAMSAGGPIISPRVNAIVVVPVAPFKLSSRPWVIPSDSEITIRLSAPKKEAVIAIDGQKSYRIKLDDVVKLKKSRFPARFVRISDTCFYERVQRKLT.

Asp-68 functions as the Proton acceptor in the catalytic mechanism. NAD(+)-binding positions include Asp-68–Gly-69, Arg-73, Asn-136–Glu-137, Lys-147, Arg-164, Asp-166, Thr-177–Ser-182, Ala-201, and Gln-236.

Belongs to the NAD kinase family. Requires a divalent metal cation as cofactor.

Its subcellular location is the cytoplasm. It carries out the reaction NAD(+) + ATP = ADP + NADP(+) + H(+). Involved in the regulation of the intracellular balance of NAD and NADP, and is a key enzyme in the biosynthesis of NADP. Catalyzes specifically the phosphorylation on 2'-hydroxyl of the adenosine moiety of NAD to yield NADP. The polypeptide is NAD kinase (Methanosarcina barkeri (strain Fusaro / DSM 804)).